Consider the following 187-residue polypeptide: Peptidyl-tRNA hydrolase (187 aa).

Residue Tyr-14 coordinates tRNA. The active-site Proton acceptor is the His-19. TRNA is bound by residues Phe-60 and Asn-62.

The protein belongs to the PTH family. As to quaternary structure, monomer.

The protein resides in the cytoplasm. It carries out the reaction an N-acyl-L-alpha-aminoacyl-tRNA + H2O = an N-acyl-L-amino acid + a tRNA + H(+). Functionally, hydrolyzes ribosome-free peptidyl-tRNAs (with 1 or more amino acids incorporated), which drop off the ribosome during protein synthesis, or as a result of ribosome stalling. Catalyzes the release of premature peptidyl moieties from peptidyl-tRNA molecules trapped in stalled 50S ribosomal subunits, and thus maintains levels of free tRNAs and 50S ribosomes. In Pseudothermotoga lettingae (strain ATCC BAA-301 / DSM 14385 / NBRC 107922 / TMO) (Thermotoga lettingae), this protein is Peptidyl-tRNA hydrolase.